A 112-amino-acid polypeptide reads, in one-letter code: UPF0060 membrane protein AAur_4166 (112 aa).

Helical transmembrane passes span I8–V28, A33–F53, V62–D82, and V91–G111.

The protein belongs to the UPF0060 family.

Its subcellular location is the cell membrane. The polypeptide is UPF0060 membrane protein AAur_4166 (Paenarthrobacter aurescens (strain TC1)).